The chain runs to 234 residues: MTENFILGRNNKLEHELKALADYINIPYSILQPYQSECFVRHYTKGQVIYFSPQESSNIYFLIEGNIIREHYNQNGDVYRYFNKEQVLFPISNLFHPKEVNELCTALTDCTVLGLPRELMAFLCKANDDIFLTLFALINDNEQQHMNYNMALTSKFAKDRIIKLFCHLCQTVGYDQDEFYEIKQFLTIQLMSDMAGISRETAGHIIHELKDEKLVVKDHKNWLVSKHLFNDVCV.

40–129 (VRHYTKGQVI…MAFLCKANDD (90 aa)) provides a ligand contact to a nucleoside 3',5'-cyclic phosphate. Positions 155-228 (KFAKDRIIKL…HKNWLVSKHL (74 aa)) constitute an HTH crp-type domain. Residues 188–207 (IQLMSDMAGISRETAGHIIH) constitute a DNA-binding region (H-T-H motif).

The protein localises to the cytoplasm. Its function is as follows. Positively regulates the expression of the arcABDCR operon under anaerobic conditions, thus playing an essential role in arginine catabolism. May also control the expression of genes encoding proteins which are involved in anaerobic metabolism. Can bind cyclic AMP. This is HTH-type transcriptional regulator ArcR (arcR) from Staphylococcus aureus (strain MSSA476).